A 400-amino-acid polypeptide reads, in one-letter code: NADH-quinone oxidoreductase subunit D (400 aa).

It belongs to the complex I 49 kDa subunit family. NDH-1 is composed of 14 different subunits. Subunits NuoB, C, D, E, F, and G constitute the peripheral sector of the complex.

Its subcellular location is the cell inner membrane. The catalysed reaction is a quinone + NADH + 5 H(+)(in) = a quinol + NAD(+) + 4 H(+)(out). In terms of biological role, NDH-1 shuttles electrons from NADH, via FMN and iron-sulfur (Fe-S) centers, to quinones in the respiratory chain. The immediate electron acceptor for the enzyme in this species is believed to be ubiquinone. Couples the redox reaction to proton translocation (for every two electrons transferred, four hydrogen ions are translocated across the cytoplasmic membrane), and thus conserves the redox energy in a proton gradient. The polypeptide is NADH-quinone oxidoreductase subunit D (Granulibacter bethesdensis (strain ATCC BAA-1260 / CGDNIH1)).